The primary structure comprises 453 residues: Glutamyl-tRNA(Gln) amidotransferase subunit A (453 aa).

Catalysis depends on charge relay system residues Lys53 and Ser128. Ser152 (acyl-ester intermediate) is an active-site residue.

The protein belongs to the amidase family. GatA subfamily. As to quaternary structure, heterotrimer of A, B and C subunits.

It catalyses the reaction L-glutamyl-tRNA(Gln) + L-glutamine + ATP + H2O = L-glutaminyl-tRNA(Gln) + L-glutamate + ADP + phosphate + H(+). Its function is as follows. Allows the formation of correctly charged Gln-tRNA(Gln) through the transamidation of misacylated Glu-tRNA(Gln) in organisms which lack glutaminyl-tRNA synthetase. The reaction takes place in the presence of glutamine and ATP through an activated gamma-phospho-Glu-tRNA(Gln). In Helicobacter pylori (strain P12), this protein is Glutamyl-tRNA(Gln) amidotransferase subunit A.